The chain runs to 358 residues: Glycerophosphodiester phosphodiesterase, periplasmic (358 aa).

The N-terminal stretch at 1 to 25 (MKLTLKNLSMAIMMSTIVMGSSAMA) is a signal peptide. Residues 31-355 (KIVIAHRGAS…DFPDKAVKFL (325 aa)) enclose the GP-PDE domain. Histidine 36 functions as the Proton acceptor in the catalytic mechanism. Glutamate 63 and aspartate 65 together coordinate Ca(2+). Histidine 78 (proton donor) is an active-site residue. A Ca(2+)-binding site is contributed by glutamate 171.

The protein belongs to the glycerophosphoryl diester phosphodiesterase family. In terms of assembly, homodimer. Requires Ca(2+) as cofactor.

Its subcellular location is the periplasm. The catalysed reaction is a sn-glycero-3-phosphodiester + H2O = an alcohol + sn-glycerol 3-phosphate + H(+). Its function is as follows. Glycerophosphodiester phosphodiesterase hydrolyzes glycerophosphodiesters into glycerol-3-phosphate (G3P) and the corresponding alcohol. In Escherichia coli (strain K12), this protein is Glycerophosphodiester phosphodiesterase, periplasmic (glpQ).